Here is a 164-residue protein sequence, read N- to C-terminus: FMN reductase (NADH) RutF (164 aa).

It belongs to the non-flavoprotein flavin reductase family. RutF subfamily.

It catalyses the reaction FMNH2 + NAD(+) = FMN + NADH + 2 H(+). Its function is as follows. Catalyzes the reduction of FMN to FMNH2 which is used to reduce pyrimidine by RutA via the Rut pathway. The sequence is that of FMN reductase (NADH) RutF from Escherichia coli O6:K15:H31 (strain 536 / UPEC).